A 192-amino-acid polypeptide reads, in one-letter code: MSKPSDRINLTNQFLIAMPNMADPTFSGTVVYLCDHSERGALGLVINRPTDIDLESLFNRIDLKLDIEPLLHIPVYFGGPVQTERGFVLHEPVEGANYNSSMSIEGGLEMTTSKDVLEAVATGTGPKRFLLTLGHAGWGAGQLEEEISRNGWLTVPADPRIVFDTPAEERFEAALGLLGVSSSMLSGEAGHA.

This sequence belongs to the UPF0301 (AlgH) family.

This is UPF0301 protein Bcep1808_0798 from Burkholderia vietnamiensis (strain G4 / LMG 22486) (Burkholderia cepacia (strain R1808)).